Consider the following 75-residue polypeptide: Tautomerase PptA (75 aa).

Proline 2 (proton acceptor; via imino nitrogen) is an active-site residue.

Belongs to the 4-oxalocrotonate tautomerase family. PptA subfamily. Homodimer.

The protein resides in the cytoplasm. This Escherichia coli (strain SMS-3-5 / SECEC) protein is Tautomerase PptA.